A 319-amino-acid polypeptide reads, in one-letter code: Probable NAD(P)H-dependent D-xylose reductase xyl1 (319 aa).

Tyrosine 50 functions as the Proton donor in the catalytic mechanism. Residue histidine 112 coordinates substrate. NAD(+)-binding positions include 166–167 (SN), 215–224 (SSFGPLSFLE), and 271–281 (KSNNPARLLQN).

Belongs to the aldo/keto reductase family.

It catalyses the reaction xylitol + NAD(+) = D-xylose + NADH + H(+). The catalysed reaction is xylitol + NADP(+) = D-xylose + NADPH + H(+). It participates in carbohydrate metabolism; D-xylose degradation. Catalyzes the initial reaction in the xylose utilization pathway by reducing D-xylose into xylitol. Xylose is a major component of hemicelluloses such as xylan. Most fungi utilize D-xylose via three enzymatic reactions, xylose reductase (XR), xylitol dehydrogenase (XDH), and xylulokinase, to form xylulose 5-phosphate, which enters pentose phosphate pathway. The protein is Probable NAD(P)H-dependent D-xylose reductase xyl1 (xyl1) of Emericella nidulans (strain FGSC A4 / ATCC 38163 / CBS 112.46 / NRRL 194 / M139) (Aspergillus nidulans).